The primary structure comprises 644 residues: Kelch-like protein 34 (644 aa).

Residues cysteine 29–methionine 96 form the BTB domain. A BACK domain is found at cysteine 131–serine 238. A disordered region spans residues alanine 304–glutamate 329. Residues glutamate 313–glutamate 329 show a composition bias toward acidic residues. 6 Kelch repeats span residues glutamate 320 to asparagine 366, phenylalanine 367 to glutamate 425, arginine 426 to arginine 473, valine 475 to glycine 526, valine 528 to glutamate 571, and alanine 573 to leucine 623.

This Homo sapiens (Human) protein is Kelch-like protein 34 (KLHL34).